Reading from the N-terminus, the 304-residue chain is Olfactory receptor 4K13 (304 aa).

Topologically, residues 1-25 (MERANHSVVSEFILLGLSKSQNLQI) are extracellular. Asn5 is a glycosylation site (N-linked (GlcNAc...) asparagine). The helical transmembrane segment at 26 to 49 (LFFLGFSVVFVGIVLGNLLILVTV) threads the bilayer. The Cytoplasmic segment spans residues 50–57 (TFDSLLHT). A helical transmembrane segment spans residues 58–79 (PMYFLLSNLSCIDMILASFATP). The Extracellular portion of the chain corresponds to 80-100 (KMIVDFLRERKTISWWGCYSQ). Cys97 and Cys189 are oxidised to a cystine. A helical transmembrane segment spans residues 101-120 (MFFMHLLGGSEMMLLVAMAI). Over 121 to 139 (DRYVAICKPLHYMTIMSPR) the chain is Cytoplasmic. The chain crosses the membrane as a helical span at residues 140 to 158 (VLTGLLLSSYAVGFVHSSS). Residues 159–195 (QMAFMLTLPFCGPNVIDSFFCDLPLVIKLACKDTYIL) lie on the Extracellular side of the membrane. Residues 196–219 (QLLVIADSGLLSLVCFLLLLVSYG) form a helical membrane-spanning segment. Residues 220 to 235 (VIIFSVRYRAASRSSK) lie on the Cytoplasmic side of the membrane. A helical membrane pass occupies residues 236-258 (AFSTLSAHITVVTLFFAPCVFIY). Residues 259–269 (VWPFSRYSVDK) are Extracellular-facing. A helical transmembrane segment spans residues 270 to 289 (ILSVFYTIFTPLLNPIIYTL). The Cytoplasmic segment spans residues 290-304 (RNQEVKAAIKKRLCI).

It belongs to the G-protein coupled receptor 1 family.

It localises to the cell membrane. Its function is as follows. Odorant receptor. The polypeptide is Olfactory receptor 4K13 (OR4K13) (Homo sapiens (Human)).